A 258-amino-acid chain; its full sequence is Thrombin-like enzyme saxthrombin (258 aa).

The signal sequence occupies residues 1–18 (MVLIRVLANLLILQLSYA). The propeptide occupies 19–24 (QKSSEL). The region spanning 25–249 (VIGGDECNIN…YNHWIQSIIA (225 aa)) is the Peptidase S1 domain. 6 cysteine pairs are disulfide-bonded: cysteine 31–cysteine 163, cysteine 50–cysteine 66, cysteine 98–cysteine 256, cysteine 142–cysteine 210, cysteine 174–cysteine 189, and cysteine 200–cysteine 225. N-linked (GlcNAc...) asparagine glycosylation occurs at asparagine 44. Catalysis depends on charge relay system residues histidine 65 and aspartate 110. Serine 204 functions as the Charge relay system in the catalytic mechanism. Residue asparagine 251 is glycosylated (N-linked (GlcNAc...) asparagine).

Belongs to the peptidase S1 family. Snake venom subfamily. As to quaternary structure, monomer. As to expression, expressed by the venom gland.

The protein resides in the secreted. Thrombin-like snake venom serine protease that shows strong blood coagulation activity in vitro. The sequence is that of Thrombin-like enzyme saxthrombin from Gloydius intermedius (Central Asian pit viper).